Reading from the N-terminus, the 93-residue chain is Acylphosphatase (93 aa).

In terms of domain architecture, Acylphosphatase-like spans 7–93; it reads RLTAWVHGWV…TEQITGFSER (87 aa). Active-site residues include arginine 22 and asparagine 40.

It belongs to the acylphosphatase family.

The catalysed reaction is an acyl phosphate + H2O = a carboxylate + phosphate + H(+). The polypeptide is Acylphosphatase (acyP) (Mycobacterium tuberculosis (strain ATCC 25177 / H37Ra)).